We begin with the raw amino-acid sequence, 337 residues long: Anthranilate phosphoribosyltransferase (337 aa).

Residues Gly81, 84–85 (GD), Ser89, 91–94 (NVST), 109–117 (KHGNRALSS), and Ala121 contribute to the 5-phospho-alpha-D-ribose 1-diphosphate site. Residue Gly81 coordinates anthranilate. Ser93 contacts Mg(2+). Asn112 serves as a coordination point for anthranilate. Arg167 provides a ligand contact to anthranilate. Positions 226 and 227 each coordinate Mg(2+).

This sequence belongs to the anthranilate phosphoribosyltransferase family. Homodimer. Mg(2+) serves as cofactor.

It catalyses the reaction N-(5-phospho-beta-D-ribosyl)anthranilate + diphosphate = 5-phospho-alpha-D-ribose 1-diphosphate + anthranilate. The protein operates within amino-acid biosynthesis; L-tryptophan biosynthesis; L-tryptophan from chorismate: step 2/5. Functionally, catalyzes the transfer of the phosphoribosyl group of 5-phosphorylribose-1-pyrophosphate (PRPP) to anthranilate to yield N-(5'-phosphoribosyl)-anthranilate (PRA). This is Anthranilate phosphoribosyltransferase from Bradyrhizobium sp. (strain BTAi1 / ATCC BAA-1182).